The primary structure comprises 229 residues: Large ribosomal subunit protein uL1 (229 aa).

It belongs to the universal ribosomal protein uL1 family. In terms of assembly, part of the 50S ribosomal subunit.

Functionally, binds directly to 23S rRNA. The L1 stalk is quite mobile in the ribosome, and is involved in E site tRNA release. In terms of biological role, protein L1 is also a translational repressor protein, it controls the translation of the L11 operon by binding to its mRNA. The sequence is that of Large ribosomal subunit protein uL1 from Staphylococcus aureus (strain MRSA252).